We begin with the raw amino-acid sequence, 358 residues long: MAAVLKPVLLGLRDAPVHGSPTGPGAWTASKLGGIPDALPTVAAPRPVCQRCGQPLALVVQVYCPLEGSPFHRLLHVFACACPGCSTGGARSWKVFRSQCLQVPEREAQDAQKQGNSLAAEDWCEGADDWGSDTEEGPSPQFTLDFGNDASSAKDVDWTARLQDLRLQDAVLGAAHPVPPGLPLFLPYYICVADEDDYRDFVNLDHAHSLLRDYQQREGIAMDQLLSQSLPNDGDEKYEKTIIKSGDQTFYKFMKRIAACQEQILRYSWSGEPLFLTCPTSEVTELPACSQCGGQRIFEFQLMPALVSMLKSANLGLSVEFGTILVYTCEKSCWPPNHQTPMEEFCIIQEDPDELLFK.

An N-acetylalanine modification is found at A2. S20 is modified (phosphoserine). T22 is modified (phosphothreonine).

As to expression, higher expression in lung, colon, mammary gland, cervix, stomach and small intestine.

Its function is as follows. Over-expression suppresses AP1, CREB, NFAT, and NF-kB transcriptional activation, and delays cell cycle progression at S phase. In Homo sapiens (Human), this protein is Programmed cell death protein 2-like (PDCD2L).